Here is a 729-residue protein sequence, read N- to C-terminus: Fatty acid oxidation complex subunit alpha (729 aa).

Residues 1 to 189 form an enoyl-CoA hydratase/isomerase region; the sequence is MLYQSETLQL…KIGLVDAVVD (189 aa). Residue D296 participates in substrate binding. The tract at residues 311-729 is 3-hydroxyacyl-CoA dehydrogenase; sequence AAPKLAAVLG…LLDVSTNQPA (419 aa). NAD(+) is bound by residues M324, D343, 400 to 402, K407, and S429; that span reads VVE. Catalysis depends on H450, which acts as the For 3-hydroxyacyl-CoA dehydrogenase activity. N453 serves as a coordination point for NAD(+). Residues N500 and Y660 each coordinate substrate.

It in the N-terminal section; belongs to the enoyl-CoA hydratase/isomerase family. In the C-terminal section; belongs to the 3-hydroxyacyl-CoA dehydrogenase family. Heterotetramer of two alpha chains (FadB) and two beta chains (FadA).

It catalyses the reaction a (3S)-3-hydroxyacyl-CoA + NAD(+) = a 3-oxoacyl-CoA + NADH + H(+). It carries out the reaction a (3S)-3-hydroxyacyl-CoA = a (2E)-enoyl-CoA + H2O. The catalysed reaction is a 4-saturated-(3S)-3-hydroxyacyl-CoA = a (3E)-enoyl-CoA + H2O. The enzyme catalyses (3S)-3-hydroxybutanoyl-CoA = (3R)-3-hydroxybutanoyl-CoA. It catalyses the reaction a (3Z)-enoyl-CoA = a 4-saturated (2E)-enoyl-CoA. It carries out the reaction a (3E)-enoyl-CoA = a 4-saturated (2E)-enoyl-CoA. It participates in lipid metabolism; fatty acid beta-oxidation. In terms of biological role, involved in the aerobic and anaerobic degradation of long-chain fatty acids via beta-oxidation cycle. Catalyzes the formation of 3-oxoacyl-CoA from enoyl-CoA via L-3-hydroxyacyl-CoA. It can also use D-3-hydroxyacyl-CoA and cis-3-enoyl-CoA as substrate. The protein is Fatty acid oxidation complex subunit alpha of Yersinia pseudotuberculosis serotype O:1b (strain IP 31758).